Reading from the N-terminus, the 366-residue chain is Variable large protein 10 (366 aa).

The signal sequence occupies residues 1–18; the sequence is MRKRISAIIMTLFMVLAS. The N-palmitoyl cysteine moiety is linked to residue Cys-19. A lipid anchor (S-diacylglycerol cysteine) is attached at Cys-19.

It belongs to the variable large protein (Vlp) family. Beta subfamily.

It localises to the cell outer membrane. Functionally, the Vlp and Vsp proteins are antigenically distinct proteins, only one vlp or vsp gene is transcriptionally active at any one time. Switching between these genes is a mechanism of host immune response evasion. This is Variable large protein 10 from Borrelia hermsii.